The following is a 344-amino-acid chain: Glycerol-3-phosphate dehydrogenase [NAD(P)+] (344 aa).

The NADPH site is built by S18, Y19, H39, and K113. K113, G142, and T144 together coordinate sn-glycerol 3-phosphate. Residue A146 coordinates NADPH. Sn-glycerol 3-phosphate-binding residues include K198, D251, S261, R262, and N263. K198 serves as the catalytic Proton acceptor. R262 contacts NADPH. 2 residues coordinate NADPH: I286 and E288.

Belongs to the NAD-dependent glycerol-3-phosphate dehydrogenase family.

It localises to the cytoplasm. It carries out the reaction sn-glycerol 3-phosphate + NAD(+) = dihydroxyacetone phosphate + NADH + H(+). It catalyses the reaction sn-glycerol 3-phosphate + NADP(+) = dihydroxyacetone phosphate + NADPH + H(+). The protein operates within membrane lipid metabolism; glycerophospholipid metabolism. Functionally, catalyzes the reduction of the glycolytic intermediate dihydroxyacetone phosphate (DHAP) to sn-glycerol 3-phosphate (G3P), the key precursor for phospholipid synthesis. The sequence is that of Glycerol-3-phosphate dehydrogenase [NAD(P)+] from Blochmanniella pennsylvanica (strain BPEN).